The chain runs to 398 residues: Histone-lysine N-methyltransferase ASHR2 (398 aa).

The SET domain occupies 11 to 270 (TLLRVAEIGG…EGREVCLSYF (260 aa)).

The protein belongs to the class V-like SAM-binding methyltransferase superfamily. Histone-lysine methyltransferase family. SET2 subfamily.

Its subcellular location is the nucleus. The protein localises to the chromosome. The catalysed reaction is L-lysyl-[histone] + S-adenosyl-L-methionine = N(6)-methyl-L-lysyl-[histone] + S-adenosyl-L-homocysteine + H(+). In terms of biological role, histone methyltransferase. In Arabidopsis thaliana (Mouse-ear cress), this protein is Histone-lysine N-methyltransferase ASHR2 (ASHR2).